Consider the following 158-residue polypeptide: Small ribosomal subunit protein eS10 (158 aa).

Residues 99–158 (ETVRRGAVGRPDAPARSAEDRSAYRRAPTTPAAHDKKADVGPGSADLEFRGGFGRGRPAP) are disordered. Positions 149–158 (GGFGRGRPAP) are enriched in gly residues.

The protein belongs to the eukaryotic ribosomal protein eS10 family.

Its subcellular location is the cytoplasm. The chain is Small ribosomal subunit protein eS10 (RpS10) from Spodoptera frugiperda (Fall armyworm).